The primary structure comprises 273 residues: Urease accessory protein UreD (273 aa).

Belongs to the UreD family. As to quaternary structure, ureD, UreF and UreG form a complex that acts as a GTP-hydrolysis-dependent molecular chaperone, activating the urease apoprotein by helping to assemble the nickel containing metallocenter of UreC. The UreE protein probably delivers the nickel.

The protein localises to the cytoplasm. Its function is as follows. Required for maturation of urease via the functional incorporation of the urease nickel metallocenter. The polypeptide is Urease accessory protein UreD (Rhizobium etli (strain ATCC 51251 / DSM 11541 / JCM 21823 / NBRC 15573 / CFN 42)).